Here is a 419-residue protein sequence, read N- to C-terminus: MQTVGREARAASRTLAAASTDAKNSALVAMAQAIRDSRDALLAANAADLAEARAAGLDEALIDRLTLSAKGVEGMAAGLEQVAALPDPVGEITDVKRRPSGIQVGKMRVPLGVVGIIYEARPNVTADAAALCLKSGNAAILRGGKEALRSNQAIASCVRTGLAAAGLPQTAVQVLETTDRAAVGALITMPEFVDVIVPRGGKGLIERISSEARVPVIKHLDGNCHVYVDDHADPAKVLPIVENAKTQRYGTCNTTESLLVARAVAPRFLSDIGRMLAARNVEMRACPEALALLREAGIEGARLSPATEQDWHEEYLAPIIAIRVVAGLDEAIAHINTYSSGHTEAILTEHYTHAMRFLREVDSASVMVNASTRFADGFEYGLGAEIGISTDKIHARGPVGLEGLTSQKWIVFGNGEIRR.

It belongs to the gamma-glutamyl phosphate reductase family.

The protein localises to the cytoplasm. It carries out the reaction L-glutamate 5-semialdehyde + phosphate + NADP(+) = L-glutamyl 5-phosphate + NADPH + H(+). It participates in amino-acid biosynthesis; L-proline biosynthesis; L-glutamate 5-semialdehyde from L-glutamate: step 2/2. In terms of biological role, catalyzes the NADPH-dependent reduction of L-glutamate 5-phosphate into L-glutamate 5-semialdehyde and phosphate. The product spontaneously undergoes cyclization to form 1-pyrroline-5-carboxylate. The protein is Gamma-glutamyl phosphate reductase of Azoarcus sp. (strain BH72).